The primary structure comprises 74 residues: Large ribosomal subunit protein bL31 (74 aa).

4 residues coordinate Zn(2+): Cys16, Cys18, Cys38, and Cys41.

The protein belongs to the bacterial ribosomal protein bL31 family. Type A subfamily. In terms of assembly, part of the 50S ribosomal subunit. Zn(2+) serves as cofactor.

Functionally, binds the 23S rRNA. The protein is Large ribosomal subunit protein bL31 (rpmE) of Streptomyces coelicolor (strain ATCC BAA-471 / A3(2) / M145).